The sequence spans 481 residues: Glutamyl-tRNA(Gln) amidotransferase subunit A (481 aa).

Catalysis depends on charge relay system residues Lys-75 and Ser-150. Catalysis depends on Ser-174, which acts as the Acyl-ester intermediate.

Belongs to the amidase family. GatA subfamily. As to quaternary structure, heterotrimer of A, B and C subunits.

It catalyses the reaction L-glutamyl-tRNA(Gln) + L-glutamine + ATP + H2O = L-glutaminyl-tRNA(Gln) + L-glutamate + ADP + phosphate + H(+). In terms of biological role, allows the formation of correctly charged Gln-tRNA(Gln) through the transamidation of misacylated Glu-tRNA(Gln) in organisms which lack glutaminyl-tRNA synthetase. The reaction takes place in the presence of glutamine and ATP through an activated gamma-phospho-Glu-tRNA(Gln). This Macrococcus caseolyticus (strain JCSC5402) (Macrococcoides caseolyticum) protein is Glutamyl-tRNA(Gln) amidotransferase subunit A.